We begin with the raw amino-acid sequence, 979 residues long: Glycine dehydrogenase (decarboxylating) (979 aa).

An N6-(pyridoxal phosphate)lysine modification is found at K724.

Belongs to the GcvP family. In terms of assembly, the glycine cleavage system is composed of four proteins: P, T, L and H. Pyridoxal 5'-phosphate is required as a cofactor.

It carries out the reaction N(6)-[(R)-lipoyl]-L-lysyl-[glycine-cleavage complex H protein] + glycine + H(+) = N(6)-[(R)-S(8)-aminomethyldihydrolipoyl]-L-lysyl-[glycine-cleavage complex H protein] + CO2. In terms of biological role, the glycine cleavage system catalyzes the degradation of glycine. The P protein binds the alpha-amino group of glycine through its pyridoxal phosphate cofactor; CO(2) is released and the remaining methylamine moiety is then transferred to the lipoamide cofactor of the H protein. In Nostoc punctiforme (strain ATCC 29133 / PCC 73102), this protein is Glycine dehydrogenase (decarboxylating).